The chain runs to 318 residues: Transaldolase (318 aa).

K132 serves as the catalytic Schiff-base intermediate with substrate.

Belongs to the transaldolase family. Type 1 subfamily. Homodimer.

The protein resides in the cytoplasm. It catalyses the reaction D-sedoheptulose 7-phosphate + D-glyceraldehyde 3-phosphate = D-erythrose 4-phosphate + beta-D-fructose 6-phosphate. The protein operates within carbohydrate degradation; pentose phosphate pathway; D-glyceraldehyde 3-phosphate and beta-D-fructose 6-phosphate from D-ribose 5-phosphate and D-xylulose 5-phosphate (non-oxidative stage): step 2/3. Transaldolase is important for the balance of metabolites in the pentose-phosphate pathway. The polypeptide is Transaldolase (Shewanella sp. (strain MR-4)).